The primary structure comprises 210 residues: uncharacterized protein (210 aa).

It localises to the mitochondrion. This is an uncharacterized protein from Schizosaccharomyces pombe (strain 972 / ATCC 24843) (Fission yeast).